A 293-amino-acid polypeptide reads, in one-letter code: Ribosomal protein L11 methyltransferase (293 aa).

Positions 145, 166, 188, and 230 each coordinate S-adenosyl-L-methionine.

It belongs to the methyltransferase superfamily. PrmA family.

Its subcellular location is the cytoplasm. It carries out the reaction L-lysyl-[protein] + 3 S-adenosyl-L-methionine = N(6),N(6),N(6)-trimethyl-L-lysyl-[protein] + 3 S-adenosyl-L-homocysteine + 3 H(+). Functionally, methylates ribosomal protein L11. In Escherichia coli O8 (strain IAI1), this protein is Ribosomal protein L11 methyltransferase.